The chain runs to 172 residues: Co-chaperone protein HscB (172 aa).

The region spanning 2 to 74 is the J domain; sequence DYFTLFGLPI…LKRAEYMLSL (73 aa).

The protein belongs to the HscB family. In terms of assembly, interacts with HscA and stimulates its ATPase activity. Interacts with IscU.

Functionally, co-chaperone involved in the maturation of iron-sulfur cluster-containing proteins. Seems to help targeting proteins to be folded toward HscA. The polypeptide is Co-chaperone protein HscB (Pectobacterium carotovorum subsp. carotovorum (strain PC1)).